We begin with the raw amino-acid sequence, 202 residues long: Dephospho-CoA kinase (202 aa).

A DPCK domain is found at 4–200 (VVGVTGGIGS…QRYLAATVAQ (197 aa)). 12–17 (GSGKSA) is an ATP binding site.

It belongs to the CoaE family.

Its subcellular location is the cytoplasm. The catalysed reaction is 3'-dephospho-CoA + ATP = ADP + CoA + H(+). Its pathway is cofactor biosynthesis; coenzyme A biosynthesis; CoA from (R)-pantothenate: step 5/5. In terms of biological role, catalyzes the phosphorylation of the 3'-hydroxyl group of dephosphocoenzyme A to form coenzyme A. The polypeptide is Dephospho-CoA kinase (Idiomarina loihiensis (strain ATCC BAA-735 / DSM 15497 / L2-TR)).